We begin with the raw amino-acid sequence, 395 residues long: Nicotinamide/nicotinic acid mononucleotide adenylyltransferase 2 (395 aa).

Disordered regions lie at residues 1–34 (MDPTKAPDFKPPQPNEELQPPPDPTHTIPKSGPI) and 62–102 (KKNA…NGID). The segment covering 9-24 (FKPPQPNEELQPPPDP) has biased composition (pro residues). Phosphoserine occurs at positions 85, 89, and 90. Residues Ser-167 and Phe-168 each contribute to the NAD(+) site. 2 residues coordinate ATP: His-175 and Arg-209. NAD(+) contacts are provided by Thr-247, Gly-282, Asp-284, Trp-295, Arg-314, and Asn-345. ATP is bound at residue 350–353 (TKVR).

This sequence belongs to the eukaryotic NMN adenylyltransferase family. Co(2+) is required as a cofactor.

The protein localises to the nucleus. The enzyme catalyses beta-nicotinamide D-ribonucleotide + ATP + H(+) = diphosphate + NAD(+). The catalysed reaction is nicotinate beta-D-ribonucleotide + ATP + H(+) = deamido-NAD(+) + diphosphate. Its pathway is cofactor biosynthesis; NAD(+) biosynthesis; deamido-NAD(+) from nicotinate D-ribonucleotide: step 1/1. The protein operates within cofactor biosynthesis; NAD(+) biosynthesis; NAD(+) from nicotinamide D-ribonucleotide: step 1/1. Its function is as follows. Catalyzes the formation of NAD(+) from nicotinamide mononucleotide (NMN) and ATP. Can also use the deamidated form; nicotinic acid mononucleotide (NaMN) as substrate to form deamido-NAD(+) (NaAD). Key enzyme in both de novo and salvage pathways for NAD(+) biosynthesis. Predominantly acts in the salvage pathways via NMN. The sequence is that of Nicotinamide/nicotinic acid mononucleotide adenylyltransferase 2 from Saccharomyces cerevisiae (strain ATCC 204508 / S288c) (Baker's yeast).